The chain runs to 367 residues: MLEFPLINDTSRKIIHIDMDAFFAQVEMRDDPSLKDKPVIIGNDPRKTGGRGVVSTCNYEAKKYGVHSAMSSKEAYERCPNAVFISGNYSHYREVGMQIREIFKCYTDLVEPMSIDEAYLDVTTNKLGIKSAVKVAKLIQYDIWQELHLTCSAGVSYNKFIAKLASDFQKPAGLTVVLPEEAQEFLKKLPIAKFHGVGKKSVERLHDMDIYTGADLLKISEITLIDRFGRFGFDLFRKARGISNSPVKPNRVRKSIGSERTYGKLLYNEDDIKAELTKNAKRVAESAQKAKKVGRIIVIKVRYSDFSTLTKRMTLDKSTQDFDTIDRISHSIFDQLEENSSGVRLLGVTLTGLEDQEGRQLDLDDLA.

A UmuC domain is found at 14–198; the sequence is IIHIDMDAFF…LPIAKFHGVG (185 aa). Residues D18 and D116 each coordinate Mg(2+). E117 is an active-site residue.

Belongs to the DNA polymerase type-Y family. In terms of assembly, monomer. The cofactor is Mg(2+).

The protein resides in the cytoplasm. The catalysed reaction is DNA(n) + a 2'-deoxyribonucleoside 5'-triphosphate = DNA(n+1) + diphosphate. Poorly processive, error-prone DNA polymerase involved in untargeted mutagenesis. Copies undamaged DNA at stalled replication forks, which arise in vivo from mismatched or misaligned primer ends. These misaligned primers can be extended by PolIV. Exhibits no 3'-5' exonuclease (proofreading) activity. May be involved in translesional synthesis, in conjunction with the beta clamp from PolIII. The sequence is that of DNA polymerase IV from Streptococcus thermophilus (strain ATCC BAA-491 / LMD-9).